A 333-amino-acid polypeptide reads, in one-letter code: NADH dehydrogenase (ubiquinone) complex I, assembly factor 6 (333 aa).

The N-terminal 44 residues, 1–44, are a transit peptide targeting the mitochondrion; sequence MAASTLGSAWGPLRLGVPGLCRRRPPRGLWARARRLSEPVASGR.

Belongs to the NDUFAF6 family.

It is found in the mitochondrion inner membrane. Involved in the assembly of mitochondrial NADH:ubiquinone oxidoreductase complex (complex I) at early stages. May play a role in the biogenesis of complex I subunit MT-ND1. In Bos taurus (Bovine), this protein is NADH dehydrogenase (ubiquinone) complex I, assembly factor 6 (NDUFAF6).